Here is a 273-residue protein sequence, read N- to C-terminus: Ribosomal RNA small subunit methyltransferase A (273 aa).

Residues asparagine 18, leucine 20, glycine 45, glutamate 66, aspartate 91, and asparagine 113 each coordinate S-adenosyl-L-methionine.

This sequence belongs to the class I-like SAM-binding methyltransferase superfamily. rRNA adenine N(6)-methyltransferase family. RsmA subfamily.

Its subcellular location is the cytoplasm. The catalysed reaction is adenosine(1518)/adenosine(1519) in 16S rRNA + 4 S-adenosyl-L-methionine = N(6)-dimethyladenosine(1518)/N(6)-dimethyladenosine(1519) in 16S rRNA + 4 S-adenosyl-L-homocysteine + 4 H(+). Specifically dimethylates two adjacent adenosines (A1518 and A1519) in the loop of a conserved hairpin near the 3'-end of 16S rRNA in the 30S particle. May play a critical role in biogenesis of 30S subunits. This chain is Ribosomal RNA small subunit methyltransferase A, found in Salmonella schwarzengrund (strain CVM19633).